The following is a 420-amino-acid chain: L-rhamnose isomerase (420 aa).

Mn(2+) contacts are provided by H264, D296, and D298.

Belongs to the rhamnose isomerase family. The cofactor is Mn(2+).

Its subcellular location is the cytoplasm. The catalysed reaction is L-rhamnopyranose = L-rhamnulose. Its pathway is carbohydrate degradation; L-rhamnose degradation; glycerone phosphate from L-rhamnose: step 1/3. Its function is as follows. Catalyzes the interconversion of L-rhamnose and L-rhamnulose. The sequence is that of L-rhamnose isomerase from Listeria monocytogenes serotype 4b (strain F2365).